Here is a 98-residue protein sequence, read N- to C-terminus: Transcription elongation factor A protein-like 7 (98 aa).

A compositionally biased stretch (basic and acidic residues) spans Met1–Glu22. Residues Met1 to Leu33 are disordered. The stretch at Gly59–Asn89 forms a coiled coil.

This sequence belongs to the TFS-II family. TFA subfamily.

The protein localises to the nucleus. In terms of biological role, plays a role in the negative regulation of NF-kappa-B signaling at the basal level by modulating transcriptional activity of NF-kappa-B on its target gene promoters. Associates with cyclin D1 promoter containing Myc E-box sequence and transcriptionally represses cyclin D1 expression. Regulates telomerase reverse transcriptase expression and telomerase activity in both ALT (alternative lengthening of telomeres)and telomerase-positive cell lines. This Mus musculus (Mouse) protein is Transcription elongation factor A protein-like 7 (Tceal7).